A 279-amino-acid chain; its full sequence is MKRLGAHVSIAGGIENAPLNARAIGATAFALFTKNQRQWKSPPLLPASIEAFRQNCADGGFEMRHILPHDSYLINLGNPDPLKLERSRAAFIDEMQRAESLGLELLNFHPGSHLNLSTPDECLRRIADSINMALEHSSCVTAVIENTAGQGTNLGNRFEQLAALIEMTDDKSRVGVCLDTCHLFAAGYDLATADAAGETFREFDRVVGMRYLRGMHLNDALHPVGSRLDRHACVGKGKIGLDAFRLVMQSPAFEEIPLILETPDSDGWAEEIRMLYGLQ.

Residues His-69, His-109, Glu-145, Asp-179, His-182, His-216, Asp-229, His-231, and Glu-261 each contribute to the Zn(2+) site.

Belongs to the AP endonuclease 2 family. The cofactor is Zn(2+).

It carries out the reaction Endonucleolytic cleavage to 5'-phosphooligonucleotide end-products.. Endonuclease IV plays a role in DNA repair. It cleaves phosphodiester bonds at apurinic or apyrimidinic (AP) sites, generating a 3'-hydroxyl group and a 5'-terminal sugar phosphate. This chain is Probable endonuclease 4, found in Chlorobium luteolum (strain DSM 273 / BCRC 81028 / 2530) (Pelodictyon luteolum).